Reading from the N-terminus, the 1069-residue chain is Enteropeptidase (1069 aa).

Over 1–18 the chain is Cytoplasmic; that stretch reads MKSSRDEAVGHHSISSFE. Residues 19–47 form a helical; Signal-anchor for type II membrane protein membrane-spanning segment; it reads VMLSALFIMLMVFSIGLIAVSWLAVKESE. The Extracellular segment spans residues 48–1069; the sequence is GDAALGKSHE…FIEWIHSFLH (1022 aa). Positions 54–169 constitute an SEA domain; that stretch reads KSHEVRGTFK…NSIDITASLS (116 aa). 3 N-linked (GlcNAc...) asparagine glycosylation sites follow: Asn147, Asn197, and Asn212. The region spanning 227 to 268 is the LDL-receptor class A 1 domain; sequence IECQPGSRPCAHAWNCVATDLFCDGEVNCPDGSDEDTGLCAT. 4 disulfides stabilise this stretch: Cys229/Cys242, Cys236/Cys255, Cys249/Cys266, and Cys270/Cys298. The CUB 1 domain occupies 270–379; it reads CDGRFLLTGD…IGFNATYSTF (110 aa). Asn373, Asn380, Asn433, Asn515, Asn579, and Asn675 each carry an N-linked (GlcNAc...) asparagine glycan. One can recognise an MAM domain in the interval 387–549; sequence YEKIDCTFDD…ISLTNGICSQ (163 aa). The cysteines at positions 569 and 597 are disulfide-linked. Residues 569–679 enclose the CUB 2 domain; the sequence is CGGPFELWEP…KGFKANFTSG (111 aa). Residues 686-724 enclose the LDL-receptor class A 2 domain; it reads EPCQDDEFQCKDGNCIPLGNLCDSYPHCRDGSDEASCVR. 3 cysteine pairs are disulfide-bonded: Cys688-Cys700, Cys695-Cys713, and Cys707-Cys722. In terms of domain architecture, SRCR spans 723–816; that stretch reads VRFLNGTRSN…LILLQCNHKS (94 aa). Asn727, Asn751, Asn770, and Asn791 each carry an N-linked (GlcNAc...) asparagine glycan. 6 disulfides stabilise this stretch: Cys802-Cys812, Cys817-Cys945, Cys859-Cys875, Cys959-Cys1027, Cys991-Cys1006, and Cys1017-Cys1045. The 240-residue stretch at 830–1069 folds into the Peptidase S1 domain; it reads IVGGSDAQAG…FIEWIHSFLH (240 aa). His874 functions as the Charge relay system in the catalytic mechanism. Asn897 is a glycosylation site (N-linked (GlcNAc...) asparagine). Catalysis depends on Asp925, which acts as the Charge relay system. Residues Asn936 and Asn999 are each glycosylated (N-linked (GlcNAc...) asparagine). Residue Ser1021 is the Charge relay system of the active site.

It belongs to the peptidase S1 family. In terms of assembly, heterodimer of a catalytic (light) chain and a multidomain (heavy) chain linked by a disulfide bond. In terms of processing, the chains are derived from a single precursor that is cleaved by a trypsin-like protease.

It localises to the membrane. It catalyses the reaction Activation of trypsinogen by selective cleavage of 6-Lys-|-Ile-7 bond.. Responsible for initiating activation of pancreatic proteolytic proenzymes (trypsin, chymotrypsin and carboxypeptidase A). It catalyzes the conversion of trypsinogen to trypsin which in turn activates other proenzymes including chymotrypsinogen, procarboxypeptidases, and proelastases. The chain is Enteropeptidase (Tmprss15) from Mus musculus (Mouse).